The primary structure comprises 334 residues: DNA-directed RNA polymerase subunit alpha (334 aa).

An alpha N-terminal domain (alpha-NTD) region spans residues 1–231 (MQSNTFLTPR…EQLSVFADLK (231 aa)). The segment at 245–334 (IDPVLLRPVD…GKKDTSHAAP (90 aa)) is alpha C-terminal domain (alpha-CTD).

This sequence belongs to the RNA polymerase alpha chain family. As to quaternary structure, homodimer. The RNAP catalytic core consists of 2 alpha, 1 beta, 1 beta' and 1 omega subunit. When a sigma factor is associated with the core the holoenzyme is formed, which can initiate transcription.

It carries out the reaction RNA(n) + a ribonucleoside 5'-triphosphate = RNA(n+1) + diphosphate. In terms of biological role, DNA-dependent RNA polymerase catalyzes the transcription of DNA into RNA using the four ribonucleoside triphosphates as substrates. This chain is DNA-directed RNA polymerase subunit alpha, found in Nitrosospira multiformis (strain ATCC 25196 / NCIMB 11849 / C 71).